We begin with the raw amino-acid sequence, 256 residues long: tRNA-cytidine(32) 2-sulfurtransferase (256 aa).

The PP-loop motif motif lies at 35–40 (SGGKDS). Cysteine 110, cysteine 113, and cysteine 201 together coordinate [4Fe-4S] cluster.

The protein belongs to the TtcA family. As to quaternary structure, homodimer. The cofactor is Mg(2+). Requires [4Fe-4S] cluster as cofactor.

Its subcellular location is the cytoplasm. The catalysed reaction is cytidine(32) in tRNA + S-sulfanyl-L-cysteinyl-[cysteine desulfurase] + AH2 + ATP = 2-thiocytidine(32) in tRNA + L-cysteinyl-[cysteine desulfurase] + A + AMP + diphosphate + H(+). Its pathway is tRNA modification. Its function is as follows. Catalyzes the ATP-dependent 2-thiolation of cytidine in position 32 of tRNA, to form 2-thiocytidine (s(2)C32). The sulfur atoms are provided by the cysteine/cysteine desulfurase (IscS) system. The chain is tRNA-cytidine(32) 2-sulfurtransferase from Coxiella burnetii (strain CbuG_Q212) (Coxiella burnetii (strain Q212)).